The primary structure comprises 362 residues: MELTQPIRENGDPQGHQLTDPDAEVVSLSPRTLLESDRYVCEICNQGFQRDQNLQMHRRRHKVPWKLLKRDKKDEEVRKRVYVCPEPTCLHHDPCHALGDLVGIKKHFRRKHSVHKQWVCERCSKGYAVQSDYKAHLKTCGSRGHSCDCGRVFSRVESFIEHQDTCTIRQPQPTNHRHLQQHTMGLDAPSRTTSTASFGPLLHGLPLLRPPRPSNQHSPAFAYPFNASSAPFESLELQLSIGMARTSAQARHNEKRETSLTKERANEEARKAEETRQEAKRQIEMAEKDFEKAKRIREEAKTELEKAHVVREEAIKRINATMMEITCHSCKQLFQLPVTADESTSSLVMSYVSSATTEGECE.

The disordered stretch occupies residues 1–22; the sequence is MELTQPIRENGDPQGHQLTDPD. C2H2-type zinc fingers lie at residues 39 to 61 and 82 to 112; these read YVCE…RRRH and YVCP…RRKH. The CCHC-type 1; atypical zinc finger occupies 118–142; sequence WVCERCSKGYAVQSDYKAHLKTCGS. Zn(2+) contacts are provided by Cys-120, Cys-123, His-136, Cys-140, Cys-147, Cys-149, His-162, and Cys-166. The CCHC-type 2; atypical zinc finger occupies 145 to 168; the sequence is HSCDCGRVFSRVESFIEHQDTCTI. An SHR-binding region spans residues 155–167; sequence RVESFIEHQDTCT. The interval 247 to 278 is disordered; it reads SAQARHNEKRETSLTKERANEEARKAEETRQE. Positions 251–278 are enriched in basic and acidic residues; that stretch reads RHNEKRETSLTKERANEEARKAEETRQE. A coiled-coil region spans residues 252–319; sequence HNEKRETSLT…VREEAIKRIN (68 aa).

Highly expressed in leaves, hypocotyls, roots, vasculature of cotyledons, floral organs and in the endodermis and vasculaturenof inflorescence stems.

The protein localises to the nucleus. Functionally, transcription factor regulating lateral organ morphogenesis and gravitropic responses. Has a redundant role with IDD14 in directing leaf and floral organ morphogenesis. Acts cooperatively with IDD15 to control silique and branche orientation. Involved in the establishment of auxin gradients through the regulation of auxin biosynthesis and transport. The sequence is that of Protein indeterminate-domain 16 from Arabidopsis thaliana (Mouse-ear cress).